The primary structure comprises 353 residues: Quinolinate synthase (353 aa).

Iminosuccinate-binding residues include histidine 47 and serine 68. Cysteine 113 lines the [4Fe-4S] cluster pocket. Residues 139–141 and serine 156 contribute to the iminosuccinate site; that span reads YAN. Residue cysteine 200 participates in [4Fe-4S] cluster binding. Residues 226-228 and threonine 243 each bind iminosuccinate; that span reads HPE. Residue cysteine 297 coordinates [4Fe-4S] cluster.

Belongs to the quinolinate synthase family. Type 1 subfamily. The cofactor is [4Fe-4S] cluster.

It localises to the cytoplasm. The catalysed reaction is iminosuccinate + dihydroxyacetone phosphate = quinolinate + phosphate + 2 H2O + H(+). The protein operates within cofactor biosynthesis; NAD(+) biosynthesis; quinolinate from iminoaspartate: step 1/1. In terms of biological role, catalyzes the condensation of iminoaspartate with dihydroxyacetone phosphate to form quinolinate. This chain is Quinolinate synthase, found in Vibrio vulnificus (strain YJ016).